A 985-amino-acid polypeptide reads, in one-letter code: NAD kinase 2, chloroplastic (985 aa).

A chloroplast-targeting transit peptide spans Met1–Ala62. The interval Ala335–Arg380 is calmodulin-binding. Disordered stretches follow at residues Ser389–Asn466 and Phe548–Gly615. 2 stretches are compositionally biased toward basic and acidic residues: residues Glu390–Glu399 and Val413–Ser429. The segment covering Phe548–Asn569 has biased composition (polar residues).

Belongs to the NAD kinase family. Expressed in leaves.

It localises to the plastid. The protein localises to the chloroplast. It catalyses the reaction NAD(+) + ATP = ADP + NADP(+) + H(+). Its function is as follows. Involved in chlorophyll synthesis and chloroplast protection against oxidative damage. This is NAD kinase 2, chloroplastic (NADK2) from Arabidopsis thaliana (Mouse-ear cress).